The following is a 613-amino-acid chain: pH-response transcription factor pacC/RIM101 (613 aa).

Residues 1–61 are disordered; that stretch reads MSPSAPEQKP…SSTAPSTSSD (61 aa). A compositionally biased stretch (low complexity) spans 11–60; the sequence is QLQQQQQQQQQGSSSGDSSSGSVNDSKSVTPAPSATSSTSQSSTAPSTSS. 3 consecutive C2H2-type zinc fingers follow at residues 64–89, 100–124, and 130–152; these read LICR…CERH, LTCQ…IRVH, and HKCE…VKTH. The span at 146-157 shows a compositional bias: basic and acidic residues; that stretch reads KKHVKTHADDSV. 4 disordered regions span residues 146–186, 371–391, 406–535, and 565–613; these read KKHV…YDHT, NTPS…GADG, AISS…ATRE, and EFVE…MPGA. Positions 417 to 441 are enriched in low complexity; it reads PPSSSMSYTSGHSPSPSSSAMSPQS. 2 stretches are compositionally biased toward polar residues: residues 442 to 460 and 506 to 517; these read RHGS…SLPA and SGASTPKASESA. Residues 451–454 carry the YPX[LI] motif 1 motif; the sequence is YPTL. Positions 605-608 match the YPX[LI] motif 2 motif; sequence YPIL.

It belongs to the pacC/RIM101 family. Binds to DNA. Activated by C-terminal proteolytic cleavage by signaling protease (probably palB/RIM13) at neutral to alkaline ambient pH.

It is found in the cytoplasm. Its subcellular location is the nucleus. Its function is as follows. Transcription factor that mediates regulation of both acid- and alkaline-expressed genes in response to ambient pH. At alkaline ambient pH, activates transcription of alkaline-expressed genes (including PAC1 itself) and represses transcription of acid-expressed genes. The polypeptide is pH-response transcription factor pacC/RIM101 (PAC1) (Gibberella moniliformis (Maize ear and stalk rot fungus)).